The chain runs to 343 residues: MLPWLLLLICALPCEPAGISDVSLKTRPPGGWVMEGDKLVLICSVDRVTGNITYFWYRGALGFQLETKTQPSLTAEFEISDMKQSDADQYYCAANDGHDPIASELVSIHVRVPVSRPVLTFGDSGTQAVLGDLVELHCKALRGSPPIFYQFYHESIILGNSSAPSGGGASFNFSLTAEHSGNFSCEASNGQGAQRSEVVALNLTGLSLVPTENGISHLSLGLTGWLLGCLSPITMALIFCYWLKRKIGRQSEDPVRSPPQTVLQGSTYPKSPDSRQPEPLYENVNVVSGNEVYSLVYHTPQVLEPAAAQHVRTHGVSESFQVSSGLYSKPRINIAHMDYEDAM.

Positions 1–16 (MLPWLLLLICALPCEP) are cleaved as a signal peptide. Ig-like C2-type domains are found at residues 17–109 (AGIS…VSIH) and 117–200 (PVLT…EVVA). At 17–219 (AGISDVSLKT…PTENGISHLS (203 aa)) the chain is on the extracellular side. Residue N51 is glycosylated (N-linked (GlcNAc...) asparagine). C138 and C185 are disulfide-bonded. Residue N202 is glycosylated (N-linked (GlcNAc...) asparagine). A helical transmembrane segment spans residues 220 to 240 (LGLTGWLLGCLSPITMALIFC). Residues 241–343 (YWLKRKIGRQ…IAHMDYEDAM (103 aa)) are Cytoplasmic-facing. The tract at residues 251-278 (SEDPVRSPPQTVLQGSTYPKSPDSRQPE) is disordered. Polar residues predominate over residues 258–269 (PPQTVLQGSTYP). Short sequence motifs (ITIM motif) lie at residues 266–271 (STYPKS), 279–284 (PLYENV), and 291–296 (EVYSLV). Y281 is modified (phosphotyrosine). Phosphotyrosine is present on Y297. Short sequence motifs (ITIM motif) lie at residues 325–330 (GLYSKP) and 337–342 (MDYEDA).

As to quaternary structure, interacts with ABL1. Interacts with GRB2 and SOS1. Interacts with SHIP-1/INPP5D. Post-translationally, phosphorylated on C-terminal region upon BCR ligation leading to recruitment of ABL1. Widely expressed. Expressed in B-cells at the various stages of differentiation.

Its subcellular location is the cell membrane. In terms of biological role, may function as an activating coreceptor in B-cells. May function in B-cells activation and differentiation. The chain is Fc receptor-like protein 1 (Fcrl1) from Mus musculus (Mouse).